The sequence spans 273 residues: Orotidine 5'-phosphate decarboxylase (273 aa).

The active-site Proton donor is the Lys-96.

This sequence belongs to the OMP decarboxylase family. Type 2 subfamily.

The enzyme catalyses orotidine 5'-phosphate + H(+) = UMP + CO2. The protein operates within pyrimidine metabolism; UMP biosynthesis via de novo pathway; UMP from orotate: step 2/2. The polypeptide is Orotidine 5'-phosphate decarboxylase (Flavobacterium johnsoniae (strain ATCC 17061 / DSM 2064 / JCM 8514 / BCRC 14874 / CCUG 350202 / NBRC 14942 / NCIMB 11054 / UW101) (Cytophaga johnsonae)).